Here is a 373-residue protein sequence, read N- to C-terminus: Lipoyl amidotransferase LIPT1, mitochondrial (373 aa).

Residues 1 to 25 (MLIPFSMKNCFQLLCNLKVPAAGFK) constitute a mitochondrion transit peptide. Positions 57-243 (LEGKPVLFLW…EYATSHQIDN (187 aa)) constitute a BPL/LPL catalytic domain. (R)-lipoyl-5'-AMP-binding residues include Tyr107, Arg151, Lys161, Thr179, Thr208, and Ala210.

This sequence belongs to the LplA family.

It is found in the mitochondrion. The enzyme catalyses N(6)-[(R)-lipoyl]-L-lysyl-[glycine-cleavage complex H protein] + L-lysyl-[lipoyl-carrier protein] = L-lysyl-[glycine-cleavage complex H protein] + N(6)-[(R)-lipoyl]-L-lysyl-[lipoyl-carrier protein]. It carries out the reaction (R)-lipoyl-5'-AMP + L-lysyl-[lipoyl-carrier protein] = N(6)-[(R)-lipoyl]-L-lysyl-[lipoyl-carrier protein] + AMP + 2 H(+). It participates in protein modification; protein lipoylation via exogenous pathway; protein N(6)-(lipoyl)lysine from lipoate: step 2/2. Inhibited by lipoyl-AMP analogs including hexanoyl-, octanoyl- and decanoyl-AMP. In terms of biological role, lipoyl amidotransferase that catalyzes the transfer of lipoyl moieties from lipoyl-protein H of the glycine cleavage system (lipoyl-GCSH) to E2 subunits of the pyruvate dehydrogenase complex (PDCE2). Unable to catalyze the transfer of octanoyl from octanoyl-GCSH to PDCE2. In vitro, it is also able to catalyze the transfer of the lipoyl group from lipoyl-AMP to the specific lysine residue of lipoyl domains of lipoate-dependent enzymes but this reaction may not be physiologically relevant. This chain is Lipoyl amidotransferase LIPT1, mitochondrial (LIPT1), found in Bos taurus (Bovine).